The chain runs to 96 residues: Large ribosomal subunit protein bL28 (96 aa).

Residues 1–23 (MSRVCELSGKAPMTGNTVSHANN) form a disordered region.

It belongs to the bacterial ribosomal protein bL28 family.

In Cereibacter sphaeroides (strain ATCC 17025 / ATH 2.4.3) (Rhodobacter sphaeroides), this protein is Large ribosomal subunit protein bL28.